Consider the following 120-residue polypeptide: NADH-ubiquinone oxidoreductase chain 3 (120 aa).

The next 3 helical transmembrane spans lie at 6-26 (LLFF…LTWV), 63-83 (IVCV…PFFF), and 85-105 (FFLV…FVFY).

This sequence belongs to the complex I subunit 3 family.

It localises to the mitochondrion membrane. It carries out the reaction a ubiquinone + NADH + 5 H(+)(in) = a ubiquinol + NAD(+) + 4 H(+)(out). Core subunit of the mitochondrial membrane respiratory chain NADH dehydrogenase (Complex I) that is believed to belong to the minimal assembly required for catalysis. Complex I functions in the transfer of electrons from NADH to the respiratory chain. The immediate electron acceptor for the enzyme is believed to be ubiquinone. The polypeptide is NADH-ubiquinone oxidoreductase chain 3 (ND3) (Paramecium tetraurelia).